We begin with the raw amino-acid sequence, 107 residues long: Iron-binding protein IscA (107 aa).

Fe cation is bound by residues C35, C99, and C101.

This sequence belongs to the HesB/IscA family. In terms of assembly, homodimer; may form tetramers and higher multimers. Fe cation is required as a cofactor.

Its function is as follows. Is able to transfer iron-sulfur clusters to apo-ferredoxin. Multiple cycles of [2Fe2S] cluster formation and transfer are observed, suggesting that IscA acts catalytically. Recruits intracellular free iron so as to provide iron for the assembly of transient iron-sulfur cluster in IscU in the presence of IscS, L-cysteine and the thioredoxin reductase system TrxA/TrxB. The chain is Iron-binding protein IscA from Serratia proteamaculans (strain 568).